The primary structure comprises 66 residues: Beta-toxin Chui4 (66 aa).

An LCN-type CS-alpha/beta domain is found at 1-66; the sequence is KEGYLVELGT…VWPLKNKTCK (66 aa). 4 disulfide bridges follow: cysteine 12/cysteine 65, cysteine 16/cysteine 41, cysteine 25/cysteine 46, and cysteine 29/cysteine 48.

This sequence belongs to the long (4 C-C) scorpion toxin superfamily. Sodium channel inhibitor family. Beta subfamily. Expressed by the venom gland.

The protein localises to the secreted. In terms of biological role, beta toxins bind voltage-independently at site-4 of sodium channels (Nav) and shift the voltage of activation toward more negative potentials thereby affecting sodium channel activation and promoting spontaneous and repetitive firing. Acts on human sodium channel Nav1.6/SCN8A. Also able to weakly shift the activation curves of human Nav1.2/SCN2A and Nav1.4/SCN4A. In Centruroides huichol (Scorpion), this protein is Beta-toxin Chui4.